We begin with the raw amino-acid sequence, 445 residues long: tRNA-2-methylthio-N(6)-dimethylallyladenosine synthase (445 aa).

The MTTase N-terminal domain occupies lysine 2–histidine 119. Positions 11, 48, 82, 156, 160, and 163 each coordinate [4Fe-4S] cluster. Residues arginine 142–serine 378 enclose the Radical SAM core domain. The TRAM domain occupies glutamine 379–threonine 442.

The protein belongs to the methylthiotransferase family. MiaB subfamily. As to quaternary structure, monomer. It depends on [4Fe-4S] cluster as a cofactor.

It is found in the cytoplasm. It carries out the reaction N(6)-dimethylallyladenosine(37) in tRNA + (sulfur carrier)-SH + AH2 + 2 S-adenosyl-L-methionine = 2-methylsulfanyl-N(6)-dimethylallyladenosine(37) in tRNA + (sulfur carrier)-H + 5'-deoxyadenosine + L-methionine + A + S-adenosyl-L-homocysteine + 2 H(+). Functionally, catalyzes the methylthiolation of N6-(dimethylallyl)adenosine (i(6)A), leading to the formation of 2-methylthio-N6-(dimethylallyl)adenosine (ms(2)i(6)A) at position 37 in tRNAs that read codons beginning with uridine. The chain is tRNA-2-methylthio-N(6)-dimethylallyladenosine synthase from Aromatoleum aromaticum (strain DSM 19018 / LMG 30748 / EbN1) (Azoarcus sp. (strain EbN1)).